A 335-amino-acid chain; its full sequence is Beta-ketoacyl-[acyl-carrier-protein] synthase III (335 aa).

Catalysis depends on residues cysteine 119 and histidine 261. The segment at 262–266 (QANQR) is ACP-binding. The active site involves asparagine 291.

The protein belongs to the thiolase-like superfamily. FabH family. Homodimer.

It localises to the cytoplasm. The enzyme catalyses malonyl-[ACP] + acetyl-CoA + H(+) = 3-oxobutanoyl-[ACP] + CO2 + CoA. The protein operates within lipid metabolism; fatty acid biosynthesis. In terms of biological role, catalyzes the condensation reaction of fatty acid synthesis by the addition to an acyl acceptor of two carbons from malonyl-ACP. Catalyzes the first condensation reaction which initiates fatty acid synthesis and may therefore play a role in governing the total rate of fatty acid production. Possesses both acetoacetyl-ACP synthase and acetyl transacylase activities. Its substrate specificity determines the biosynthesis of branched-chain and/or straight-chain of fatty acids. The sequence is that of Beta-ketoacyl-[acyl-carrier-protein] synthase III from Prochlorococcus marinus (strain MIT 9215).